A 151-amino-acid chain; its full sequence is MLLLLLLLLLGPGSCLSEATRRSHVYKRGLLELAGTLDCVGPRSPMAYMNYGCYCGLGGHGEPRDAIDWCCYYHDCCYSQAQDAGCSPKLYRYPWKCMDHRILCGPAENKCQELLCRCDETLAYCLADTEYHLKYLFFPSVLCEKDSPKCN.

The first 17 residues, 1-17 (MLLLLLLLLLGPGSCLS), serve as a signal peptide directing secretion. A propeptide spanning residues 18–28 (EATRRSHVYKR) is cleaved from the precursor. 8 disulfide bridges follow: Cys-39/Cys-97, Cys-53/Cys-143, Cys-55/Cys-71, Cys-70/Cys-125, Cys-76/Cys-150, Cys-77/Cys-118, Cys-86/Cys-111, and Cys-104/Cys-116. Tyr-54, Gly-56, and Gly-58 together coordinate Ca(2+). His-74 is an active-site residue. Asp-75 serves as a coordination point for Ca(2+). The active site involves Asp-119.

This sequence belongs to the phospholipase A2 family. Interacts with PLA2R1; this interaction mediates PLA2G10 clearance and inactivation. The cofactor is Ca(2+).

The protein resides in the secreted. The protein localises to the lysosome. It is found in the cytoplasmic vesicle. It localises to the secretory vesicle. Its subcellular location is the acrosome. The catalysed reaction is a 1,2-diacyl-sn-glycero-3-phosphocholine + H2O = a 1-acyl-sn-glycero-3-phosphocholine + a fatty acid + H(+). It carries out the reaction 1-hexadecanoyl-2-(9Z-octadecenoyl)-sn-glycero-3-phosphocholine + H2O = 1-hexadecanoyl-sn-glycero-3-phosphocholine + (9Z)-octadecenoate + H(+). The enzyme catalyses 1-octadecanoyl-2-(5Z,8Z,11Z,14Z-eicosatetraenoyl)-sn-glycero-3-phosphocholine + H2O = 1-octadecanoyl-sn-glycero-3-phosphocholine + (5Z,8Z,11Z,14Z)-eicosatetraenoate + H(+). It catalyses the reaction 1,2-dihexadecanoyl-sn-glycero-3-phosphocholine + H2O = 1-hexadecanoyl-sn-glycero-3-phosphocholine + hexadecanoate + H(+). The catalysed reaction is 1-hexadecanoyl-2-(9Z-octadecenoyl)-sn-glycero-3-phosphoglycerol + H2O = 1-hexadecanoyl-sn-glycero-3-phosphoglycerol + (9Z)-octadecenoate + H(+). It carries out the reaction 1,2-dihexadecanoyl-sn-glycero-3-phospho-(1'-sn-glycerol) + H2O = 1-hexadecanoyl-sn-glycero-3-phospho-(1'-sn-glycerol) + hexadecanoate + H(+). The enzyme catalyses 1-hexadecanoyl-2-(9Z-octadecenoyl)-sn-glycero-3-phospho-L-serine + H2O = 1-hexadecanoyl-sn-glycero-3-phospho-L-serine + (9Z)-octadecenoate + H(+). It catalyses the reaction 1-hexadecanoyl-2-(9Z,12Z-octadecadienoyl)-sn-glycero-3-phosphoethanolamine + H2O = 1-hexadecanoyl-sn-glycero-3-phosphoethanolamine + (9Z,12Z)-octadecadienoate + H(+). The catalysed reaction is 1-hexadecanoyl-2-(9Z-octadecenoyl)-sn-glycero-3-phosphate + H2O = 1-hexadecanoyl-sn-glycero-3-phosphate + (9Z)-octadecenoate + H(+). It carries out the reaction 1-O-hexadecyl-2-acetyl-sn-glycero-3-phosphocholine + H2O = 1-O-hexadecyl-sn-glycero-3-phosphocholine + acetate + H(+). Functionally, secretory calcium-dependent phospholipase A2 that primarily targets extracellular phospholipids. Hydrolyzes the ester bond of the fatty acyl group attached at sn-2 position of phospholipids with preference for phosphatidylcholines and phosphatidylglycerols over phosphatidylethanolamines. Preferentially releases sn-2 omega-6 and omega-3 polyunsaturated fatty acyl (PUFA) chains over saturated fatty acyls. Contributes to phospholipid remodeling of very low-density lipoprotein (VLDL), low-density lipoprotein (LDL) and high-density lipoprotein (HDL) particles. Hydrolyzes LDL phospholipids releasing unsaturated fatty acids that regulate macrophage differentiation toward foam cells. Efficiently hydrolyzes and inactivates platelet activating factor (PAF), a potent lipid mediator present in oxidized LDL. May act in an autocrine and paracrine manner. Secreted by lung epithelium, targets membrane phospholipids of infiltrating eosinophils, releasing arachidonate and boosting eicosanoid and cysteinyl leukotriene synthesis involved in airway inflammatory response. Secreted by gut epithelium, hydrolyzes dietary and biliary phosphatidylcholines in the gastrointestinal lumen. Plays a stem cell regulator role in colon epithelium. Within intracellular compartment, mediates Paneth-like cell differentiation and its stem cell supporting functions by inhibiting the Wnt signaling pathway in intestinal stem cell (ISC). Secreted in the intestinal lumen upon inflammation, acts in an autocrine way and promotes prostaglandin E2 synthesis that stimulates Wnt signaling pathway in ISCs and tissue regeneration. May participate in hair follicle morphogenesis by regulating phosphatidylethanolamines metabolism at the outermost epithelial layer and facilitating melanin synthesis. By releasing lysophosphatidylcholines (LPCs) at sperm acrosome, controls sperm cell capacitation, acrosome reaction and overall fertility. May promote neurite outgrowth in neuron fibers involved in nociception. Contributes to lipid remodeling of cellular membranes and generation of lipid mediators involved in pathogen clearance. Cleaves sn-2 fatty acyl chains of phosphatidylglycerols and phosphatidylethanolamines, which are major components of membrane phospholipids in bacteria. Displays bactericidal activity against Gram-positive bacteria by directly hydrolyzing phospholipids of the bacterial membrane. In pulmonary epithelium, may contribute to host defense response against adenoviral infection. Prevents adenovirus entry into host cells by hydrolyzing host cell plasma membrane, releasing C16:0 LPCs that inhibit virus-mediated membrane fusion and viral infection. Likely prevents adenoviral entry into the endosomes of host cells. May play a role in maturation and activation of innate immune cells including macrophages, group 2 innate lymphoid cells and mast cells. This chain is Group 10 secretory phospholipase A2 (Pla2g10), found in Rattus norvegicus (Rat).